Consider the following 614-residue polypeptide: Kelch-like protein 40 (614 aa).

Residues 33–100 (IDCVLKIQGK…IYTSEIEITE (68 aa)) form the BTB domain. Positions 135–237 (CLAIFRLGLL…PQDYIKNKVE (103 aa)) constitute a BACK domain. Kelch repeat units lie at residues 353–405 (QLFV…ESEN), 406–455 (SIYL…SHDN), 456–503 (LVYV…VHKG), 504–550 (KIFI…SMNG), and 552–606 (LYAI…AARL).

Belongs to the KLHL40 family. As to quaternary structure, component of the BCR(KLHL40) E3 ubiquitin ligase complex.

It is found in the cytoplasm. The protein resides in the myofibril. Its subcellular location is the sarcomere. The protein localises to the a band. It localises to the i band. Its function is as follows. Substrate-specific adapter of a BCR (BTB-CUL3-RBX1) E3 ubiquitin ligase complex that acts as a key regulator of skeletal muscle development. This chain is Kelch-like protein 40 (klhl40), found in Xenopus laevis (African clawed frog).